The chain runs to 90 residues: Toxin 3FTx-Psa1 (90 aa).

The N-terminal stretch at 1–21 (MKTLPLVLAVVAFVYLDLAHT) is a signal peptide. Disulfide bonds link cysteine 24-cysteine 43, cysteine 36-cysteine 61, cysteine 65-cysteine 76, and cysteine 77-cysteine 82.

It belongs to the three-finger toxin family. Ancestral subfamily. As to expression, expressed by the venom gland.

The protein localises to the secreted. In Psammophis mossambicus (Olive sand snake), this protein is Toxin 3FTx-Psa1.